The sequence spans 128 residues: Large-conductance mechanosensitive channel (128 aa).

Transmembrane regions (helical) follow at residues 10–30 (FAMR…SAFG) and 76–96 (GLFI…FMMI).

The protein belongs to the MscL family. In terms of assembly, homopentamer.

The protein resides in the cell inner membrane. Channel that opens in response to stretch forces in the membrane lipid bilayer. May participate in the regulation of osmotic pressure changes within the cell. This is Large-conductance mechanosensitive channel from Haemophilus influenzae (strain 86-028NP).